The chain runs to 318 residues: Galactose-1-phosphate uridylyltransferase (318 aa).

3 residues coordinate Zn(2+): Cys-32, Cys-35, and His-90. UDP-alpha-D-glucose is bound at residue Asn-130. His-141 contributes to the Zn(2+) binding site. His-143 acts as the Tele-UMP-histidine intermediate in catalysis. Position 145 (Gln-145) interacts with UDP-alpha-D-glucose.

It belongs to the galactose-1-phosphate uridylyltransferase type 1 family. The cofactor is Zn(2+).

It catalyses the reaction alpha-D-galactose 1-phosphate + UDP-alpha-D-glucose = alpha-D-glucose 1-phosphate + UDP-alpha-D-galactose. The protein operates within carbohydrate metabolism; galactose metabolism. In Thermotoga maritima (strain ATCC 43589 / DSM 3109 / JCM 10099 / NBRC 100826 / MSB8), this protein is Galactose-1-phosphate uridylyltransferase (galT).